The chain runs to 492 residues: MNFTQDLRLLLKSRYPIIVINTREEDRLEYIIKHSLNCSNSQQVYSWDFVDGYTNNPSDNGYAKRNPLLALEFIENLNNESLNLFLLKDFDSFLNEIVLIRKLRNLAKIIKTQSKHIIIISCKINIPFALNDIITVIDLPLPSLLEIKKEIIRLSKALNLNLNSELVNNITKSCQGLSIDRIRKVITKIIAQYNQIDSRSLPIIIEEKRQIINQTHLLEFYPYSKVNRDIGGLDVLKQWLQKRSRSFSKQSLNYGIPSPKGLLLVGIQGTGKSLTAKAIASDWMLPLLRLDMGKLFGGLVGESESKMREMINISEGLSPCILWIDEIDKAFSGLHSQGDSGTSARVFGTFITWLSEKKAPVFVVATANKIQSLPSEMLRKGRFDEIFFLDLPNRQERESIFKIHLSKVRPRSWQKYDIHELSLLCNKFSGAEIEQAIIESMHTAFSEEREFSTEDIKIAIKQFVPLAFTDKEQVESLQAWAGDGRARNASLT.

Position 266–273 (266–273 (GIQGTGKS)) interacts with ATP.

This sequence belongs to the AAA ATPase family. Highly divergent.

It localises to the plastid. The protein resides in the chloroplast. This is an uncharacterized protein from Pyropia yezoensis (Susabi-nori).